We begin with the raw amino-acid sequence, 137 residues long: Basic phospholipase A2 homolog Bsc-K49 (137 aa).

An N-terminal signal peptide occupies residues 1-16 (MRTLWIVAVLLVGVEG). Cystine bridges form between C42–C131, C44–C60, C59–C111, C65–C137, C66–C104, C73–C97, and C91–C102. Residues 121-133 (KNYKITMKMFCKK) are important for membrane-damaging activities in eukaryotes and bacteria; heparin-binding.

The protein belongs to the phospholipase A2 family. Group II subfamily. K49 sub-subfamily. In terms of assembly, homodimer; non-covalently linked. As to expression, expressed by the venom gland.

Its subcellular location is the secreted. Functionally, snake venom phospholipase A2 that lacks enzymatic activity. Is myotoxic, and displays edema-inducing activities. A model of myotoxic mechanism has been proposed: an apo Lys49-PLA2 is activated by the entrance of a hydrophobic molecule (e.g. fatty acid) at the hydrophobic channel of the protein leading to a reorientation of a monomer. This reorientation causes a transition between 'inactive' to 'active' states, causing alignment of C-terminal and membrane-docking sites (MDoS) side-by-side and putting the membrane-disruption sites (MDiS) in the same plane, exposed to solvent and in a symmetric position for both monomers. The MDoS region stabilizes the toxin on membrane by the interaction of charged residues with phospholipid head groups. Subsequently, the MDiS region destabilizes the membrane with penetration of hydrophobic residues. This insertion causes a disorganization of the membrane, allowing an uncontrolled influx of ions (i.e. calcium and sodium), and eventually triggering irreversible intracellular alterations and cell death. This chain is Basic phospholipase A2 homolog Bsc-K49, found in Bothriechis schlegelii (Eyelash palm pitviper).